The primary structure comprises 192 residues: MKVILASKSPRRVEILEKIVKEFEVVQSNFDENTIDFKGDVEKYVKDLSRNKAIEVSKRLNEPSIVIAADTVVFQNGKVLEKPKSEEDAFSMLSSLSGNTHKVYSGICLINTYDDTVVTDCDCTEVKFSELNPRQIRNYINSGEPMDKAGAYGIQGLGGAFVERIEGCYYNVMGLPLNKLYKALENYDITIL.

The active-site Proton acceptor is the Asp-70.

This sequence belongs to the Maf family. YhdE subfamily. A divalent metal cation serves as cofactor.

It localises to the cytoplasm. It carries out the reaction dTTP + H2O = dTMP + diphosphate + H(+). The catalysed reaction is UTP + H2O = UMP + diphosphate + H(+). Its function is as follows. Nucleoside triphosphate pyrophosphatase that hydrolyzes dTTP and UTP. May have a dual role in cell division arrest and in preventing the incorporation of modified nucleotides into cellular nucleic acids. The protein is dTTP/UTP pyrophosphatase of Clostridium perfringens (strain SM101 / Type A).